A 230-amino-acid chain; its full sequence is Ribonuclease HII (230 aa).

The RNase H type-2 domain maps to 21 to 212 (GPVAGVDEVG…VRRVANGSGG (192 aa)). Residues aspartate 27, glutamate 28, and aspartate 121 each contribute to the a divalent metal cation site.

This sequence belongs to the RNase HII family. The cofactor is Mn(2+). Mg(2+) is required as a cofactor.

Its subcellular location is the cytoplasm. The catalysed reaction is Endonucleolytic cleavage to 5'-phosphomonoester.. Endonuclease that specifically degrades the RNA of RNA-DNA hybrids. In Mycobacterium avium (strain 104), this protein is Ribonuclease HII.